The following is a 112-amino-acid chain: Notch-regulated ankyrin repeat-containing protein A (112 aa).

ANK repeat units follow at residues 48–77 and 81–110; these read EGQT…DIRL and EGWS…YSSG.

Belongs to the NRARP family.

Regulates independently canonical Wnt and Notch signaling by modulating LEF1 and Notch protein turnover. Stabilizes LEF1, a pivotal transcription factor in the Wnt signaling cascade, by blocking its ubiquitination. Involved in angiogenesis; involved in intersegmental vessel patterning during development. In Danio rerio (Zebrafish), this protein is Notch-regulated ankyrin repeat-containing protein A (nrarpa).